The primary structure comprises 102 residues: Iron-sulfur cluster assembly protein CyaY (102 aa).

The protein belongs to the frataxin family.

Functionally, involved in iron-sulfur (Fe-S) cluster assembly. May act as a regulator of Fe-S biogenesis. The chain is Iron-sulfur cluster assembly protein CyaY from Histophilus somni (strain 2336) (Haemophilus somnus).